The chain runs to 346 residues: Biotin synthase (346 aa).

The region spanning 38–256 (QQVQVSTLLS…IAVARIMMPT (219 aa)) is the Radical SAM core domain. [4Fe-4S] cluster is bound by residues Cys53, Cys57, and Cys60. Positions 97, 128, 188, and 260 each coordinate [2Fe-2S] cluster.

This sequence belongs to the radical SAM superfamily. Biotin synthase family. In terms of assembly, homodimer. [4Fe-4S] cluster serves as cofactor. The cofactor is [2Fe-2S] cluster.

The catalysed reaction is (4R,5S)-dethiobiotin + (sulfur carrier)-SH + 2 reduced [2Fe-2S]-[ferredoxin] + 2 S-adenosyl-L-methionine = (sulfur carrier)-H + biotin + 2 5'-deoxyadenosine + 2 L-methionine + 2 oxidized [2Fe-2S]-[ferredoxin]. The protein operates within cofactor biosynthesis; biotin biosynthesis; biotin from 7,8-diaminononanoate: step 2/2. Its function is as follows. Catalyzes the conversion of dethiobiotin (DTB) to biotin by the insertion of a sulfur atom into dethiobiotin via a radical-based mechanism. This Salmonella gallinarum (strain 287/91 / NCTC 13346) protein is Biotin synthase.